Reading from the N-terminus, the 434-residue chain is Galactofuranosyl glycosyltransferase (434 aa).

Residues M1–R18 are Cytoplasmic-facing. The chain crosses the membrane as a helical; Signal-anchor for type II membrane protein span at residues V19–Y38. Residues N39, N100, N162, and N388 are each glycosylated (N-linked (GlcNAc...) asparagine). At N39–S434 the chain is on the lumenal side.

This sequence belongs to the glycosyltransferase 2 family.

Its subcellular location is the endoplasmic reticulum membrane. It participates in glycolipid biosynthesis; glycosylphosphatidylinositol-anchor biosynthesis. In terms of biological role, glycosyltransferase that may be responsible for the addition of galactofuranosyl residues to the nascent lipophosphoglycan (LPG) chain. It could alternatively be involved in the synthesis of the galactofuranosyl donor. This is Galactofuranosyl glycosyltransferase (LPG1) from Leishmania donovani.